The primary structure comprises 552 residues: Chaperonin GroEL (552 aa).

Residues 30 to 33 (TLGP), K51, 87 to 91 (DGTTT), G415, 480 to 482 (NAA), and D496 contribute to the ATP site.

Belongs to the chaperonin (HSP60) family. Forms a cylinder of 14 subunits composed of two heptameric rings stacked back-to-back. Interacts with the co-chaperonin GroES.

The protein resides in the cytoplasm. The enzyme catalyses ATP + H2O + a folded polypeptide = ADP + phosphate + an unfolded polypeptide.. In terms of biological role, together with its co-chaperonin GroES, plays an essential role in assisting protein folding. The GroEL-GroES system forms a nano-cage that allows encapsulation of the non-native substrate proteins and provides a physical environment optimized to promote and accelerate protein folding. This is Chaperonin GroEL from Coxiella burnetii (strain RSA 331 / Henzerling II).